The sequence spans 720 residues: Engulfment and cell motility protein 2 (720 aa).

The residue at position 48 (Y48) is a Phosphotyrosine. In terms of domain architecture, ELMO spans 311–485 (AQRDIIFELR…VVREQITRAL (175 aa)). S503 bears the Phosphoserine mark. The PH domain occupies 553–674 (SSFRKIGNRR…LLGKDMSSEL (122 aa)). Positions 700–707 (PEAPPPIP) match the SH3-binding motif. Phosphotyrosine is present on Y717.

As to quaternary structure, interacts with the SH3-domain of DOCK1 via its SH3-binding site. Probably part of a complex with DOCK1 and RAC1. Probably part of a complex with DOCK1 and CRK isoform CRK-II. Interacts with ARHGEF16, DOCK4 and EPHA2; mediates activation of RAC1 by EPHA2. Interacts with ADGRB3. Interacts with AUTS2; the interaction is direct. In terms of tissue distribution, widely expressed, with a higher expression in skeletal muscle, kidney and placenta.

The protein resides in the cytoplasm. The protein localises to the cytosol. It localises to the membrane. Involved in cytoskeletal rearrangements required for phagocytosis of apoptotic cells and cell motility. Acts in association with DOCK1 and CRK. Was initially proposed to be required in complex with DOCK1 to activate Rac Rho small GTPases. May enhance the guanine nucleotide exchange factor (GEF) activity of DOCK1. In Homo sapiens (Human), this protein is Engulfment and cell motility protein 2 (ELMO2).